A 421-amino-acid chain; its full sequence is Gamma-glutamyl phosphate reductase (421 aa).

Belongs to the gamma-glutamyl phosphate reductase family.

It localises to the cytoplasm. The enzyme catalyses L-glutamate 5-semialdehyde + phosphate + NADP(+) = L-glutamyl 5-phosphate + NADPH + H(+). It functions in the pathway amino-acid biosynthesis; L-proline biosynthesis; L-glutamate 5-semialdehyde from L-glutamate: step 2/2. Functionally, catalyzes the NADPH-dependent reduction of L-glutamate 5-phosphate into L-glutamate 5-semialdehyde and phosphate. The product spontaneously undergoes cyclization to form 1-pyrroline-5-carboxylate. This chain is Gamma-glutamyl phosphate reductase, found in Azotobacter vinelandii (strain DJ / ATCC BAA-1303).